The chain runs to 364 residues: MPEVQRMTLTQFLIEQRRRYPDASGGFNGLILNVAMACKEIARAVAFGALGGLHGRAGGPDAAGAAINVQGEVQQKLDVLSNDTFLRVNEWGGYLAGMASEEMEAPYQIPAHYPRGKYLLVFDPLDGSSNIDVNVSVGSIFSVLRAPEGTADVTEQAFLQPGTAQVAAGYALYGPTTMLVLTVGNGVNGFTLDPNLGEFFLTHPDLRVPADTREFAINASNSRFWEAPIRQYVSECLAGQTGPRGKDFNMRWIASMVAEAHRILMRGGVFMYPRDTKDPARPGRLRLLYEANPIAFLMEQAGGRASTGRQALMSVAPNALHQRIGVIFGSRHEVERIERYHNEQTDPDLPNPLFNERSLFRASA.

Mg(2+)-binding residues include Glu101, Asp123, Leu125, and Asp126. Substrate contacts are provided by residues 126–129 and Asn218; that span reads DGSS. Glu290 provides a ligand contact to Mg(2+).

It belongs to the FBPase class 1 family. Homotetramer. Mg(2+) is required as a cofactor.

Its subcellular location is the cytoplasm. It catalyses the reaction beta-D-fructose 1,6-bisphosphate + H2O = beta-D-fructose 6-phosphate + phosphate. It participates in carbohydrate biosynthesis; gluconeogenesis. The chain is Fructose-1,6-bisphosphatase class 1 2 from Cupriavidus taiwanensis (strain DSM 17343 / BCRC 17206 / CCUG 44338 / CIP 107171 / LMG 19424 / R1) (Ralstonia taiwanensis (strain LMG 19424)).